The chain runs to 131 residues: Plastocyanin (131 aa).

The N-terminal stretch at 1–34 (MKFFASLSKRFAPVLSLVVLVAGTLLLSAAPASA) is a signal peptide. A Plastocyanin-like domain is found at 35-131 (ATVQIKMGTD…AGMVGTITVE (97 aa)). Positions 73, 116, 119, and 124 each coordinate Cu cation.

It belongs to the plastocyanin family. The cofactor is Cu(2+).

The protein resides in the cellular thylakoid membrane. Its function is as follows. Participates in electron transfer between P700 and the cytochrome b6-f complex in photosystem I. The sequence is that of Plastocyanin (petE) from Prochlorothrix hollandica.